Reading from the N-terminus, the 141-residue chain is Large ribosomal subunit protein uL16 (141 aa).

Residues 1–19 (MLMPKKTKYRKQQKGRNRG) are compositionally biased toward basic residues. A disordered region spans residues 1–22 (MLMPKKTKYRKQQKGRNRGKAY).

It belongs to the universal ribosomal protein uL16 family. As to quaternary structure, part of the 50S ribosomal subunit.

Its function is as follows. Binds 23S rRNA and is also seen to make contacts with the A and possibly P site tRNAs. The sequence is that of Large ribosomal subunit protein uL16 from Nitratiruptor sp. (strain SB155-2).